The primary structure comprises 600 residues: Methionine--tRNA ligase (600 aa).

Positions 12–22 match the 'HIGH' region motif; it reads PYANGPRHIGH. 4 residues coordinate Zn(2+): C144, C147, C157, and C160. The 'KMSKS' region motif lies at 351–355; the sequence is KFSSS. S354 contacts ATP.

It belongs to the class-I aminoacyl-tRNA synthetase family. MetG type 1 subfamily. Monomer. It depends on Zn(2+) as a cofactor.

It localises to the cytoplasm. The enzyme catalyses tRNA(Met) + L-methionine + ATP = L-methionyl-tRNA(Met) + AMP + diphosphate. Its function is as follows. Is required not only for elongation of protein synthesis but also for the initiation of all mRNA translation through initiator tRNA(fMet) aminoacylation. In Chloroflexus aurantiacus (strain ATCC 29364 / DSM 637 / Y-400-fl), this protein is Methionine--tRNA ligase.